We begin with the raw amino-acid sequence, 65 residues long: Putative beta-neurotoxin RjAa12 (65 aa).

Residues 1–64 (KEGYPVGRDG…VWDSSTNKCG (64 aa)) enclose the LCN-type CS-alpha/beta domain. Disulfide bonds link cysteine 11–cysteine 63, cysteine 15–cysteine 37, cysteine 22–cysteine 44, and cysteine 26–cysteine 46.

The protein belongs to the long (4 C-C) scorpion toxin superfamily. Sodium channel inhibitor family. Beta subfamily. As to expression, expressed by the venom gland.

The protein resides in the secreted. Functionally, beta toxins bind voltage-independently at site-4 of sodium channels (Nav) and shift the voltage of activation toward more negative potentials thereby affecting sodium channel activation and promoting spontaneous and repetitive firing. In Rhopalurus junceus (Caribbean blue scorpion), this protein is Putative beta-neurotoxin RjAa12.